Here is a 468-residue protein sequence, read N- to C-terminus: Spliceosome-associated protein CWC27 homolog (468 aa).

Serine 2 is subject to N-acetylserine. In terms of domain architecture, PPIase cyclophilin-type spans 11–166; the sequence is TNGKVLLKTT…NPHRIKSCEV (156 aa). Disordered stretches follow at residues 204-382 and 427-468; these read LLSF…EDQT and RKVK…KERR. Residues 206-229 adopt a coiled-coil conformation; sequence SFGEEAEEEEEEVNRVSQSMKGRS. A compositionally biased stretch (basic and acidic residues) spans 231 to 241; that stretch reads SSHDLLKDDPH. Acidic residues predominate over residues 256–268; it reads TGDLEDDAEDDSV. 2 stretches are compositionally biased toward basic and acidic residues: residues 269-287 and 302-342; these read EHDGSMEEDEKNLMRERIA and GDGE…AEKG. Serine 273 is subject to Phosphoserine. The stretch at 309–342 forms a coiled coil; the sequence is ASRSEELRKEARQLKRELLAAKQKKESATKAEKG. A Phosphoserine modification is found at serine 343. Basic and acidic residues-rich tracts occupy residues 356–368 and 453–468; these read EYRREKQKYEALR and RREESKKLLREKKERR.

The protein belongs to the cyclophilin-type PPIase family. As to quaternary structure, part of the activated spliceosome B/catalytic step 1 spliceosome, one of the forms of the spliceosome which has a well-formed active site but still cannot catalyze the branching reaction and is composed at least of 52 proteins, the U2, U5 and U6 snRNAs and the pre-mRNA. Recruited during early steps of activated spliceosome B maturation, it is probably one of the first proteins released from this complex as he matures to the spliceosome C complex. Component of the minor spliceosome, which splices U12-type introns.

The protein resides in the nucleus. Its function is as follows. As part of the spliceosome, plays a role in pre-mRNA splicing. Probable inactive PPIase with no peptidyl-prolyl cis-trans isomerase activity. As a component of the minor spliceosome, involved in the splicing of U12-type introns in pre-mRNAs. The sequence is that of Spliceosome-associated protein CWC27 homolog from Rattus norvegicus (Rat).